The following is a 181-amino-acid chain: Ribosome maturation factor RimM (181 aa).

The PRC barrel domain maps to 98–177; it reads EGEFFYCDLV…KITTHNAKTL (80 aa).

This sequence belongs to the RimM family. Binds ribosomal protein uS19.

Its subcellular location is the cytoplasm. Functionally, an accessory protein needed during the final step in the assembly of 30S ribosomal subunit, possibly for assembly of the head region. Essential for efficient processing of 16S rRNA. May be needed both before and after RbfA during the maturation of 16S rRNA. It has affinity for free ribosomal 30S subunits but not for 70S ribosomes. The polypeptide is Ribosome maturation factor RimM (Helicobacter pylori (strain HPAG1)).